Reading from the N-terminus, the 233-residue chain is Nucleoside diphosphate kinase 2, chloroplastic (233 aa).

Residues 1 to 67 (MEAMSGLSSP…LISHSLPRKK (67 aa)) constitute a chloroplast transit peptide. K93, F141, R169, T175, R186, and N196 together coordinate ATP. H199 (pros-phosphohistidine intermediate) is an active-site residue.

The protein belongs to the NDK family. It depends on Mg(2+) as a cofactor.

It is found in the plastid. The protein resides in the chloroplast. It catalyses the reaction a 2'-deoxyribonucleoside 5'-diphosphate + ATP = a 2'-deoxyribonucleoside 5'-triphosphate + ADP. The catalysed reaction is a ribonucleoside 5'-diphosphate + ATP = a ribonucleoside 5'-triphosphate + ADP. Major role in the synthesis of nucleoside triphosphates other than ATP. The ATP gamma phosphate is transferred to the NDP beta phosphate via a ping-pong mechanism, using a phosphorylated active-site intermediate. The polypeptide is Nucleoside diphosphate kinase 2, chloroplastic (NDPK2) (Spinacia oleracea (Spinach)).